The chain runs to 346 residues: L-threonine 3-dehydrogenase (346 aa).

Position 42 (C42) interacts with Zn(2+). Catalysis depends on charge relay system residues T44 and H47. Positions 67, 68, 97, 100, 103, and 111 each coordinate Zn(2+). NAD(+)-binding positions include I179, D199, R204, 266–268 (LSL), and 291–292 (IT).

Belongs to the zinc-containing alcohol dehydrogenase family. Homotetramer. Zn(2+) serves as cofactor.

Its subcellular location is the cytoplasm. The enzyme catalyses L-threonine + NAD(+) = (2S)-2-amino-3-oxobutanoate + NADH + H(+). The protein operates within amino-acid degradation; L-threonine degradation via oxydo-reductase pathway; glycine from L-threonine: step 1/2. In terms of biological role, catalyzes the NAD(+)-dependent oxidation of L-threonine to 2-amino-3-ketobutyrate. The sequence is that of L-threonine 3-dehydrogenase from Bacillus licheniformis (strain ATCC 14580 / DSM 13 / JCM 2505 / CCUG 7422 / NBRC 12200 / NCIMB 9375 / NCTC 10341 / NRRL NRS-1264 / Gibson 46).